Here is a 407-residue protein sequence, read N- to C-terminus: RING-H2 finger protein ATL43 (407 aa).

The first 22 residues, 1–22, serve as a signal peptide directing secretion; sequence MSSSSLILLFSTLSLFLNVSLA. A helical membrane pass occupies residues 57–77; it reads GIAVVIAVLTAFFSLTFLLLL. The RING-type; atypical zinc finger occupies 146–188; the sequence is CAVCLARFEPTEVLRLLPKCKHAFHVECVDTWLDAHSTCPLCR.

This sequence belongs to the RING-type zinc finger family. ATL subfamily.

The protein resides in the membrane. The enzyme catalyses S-ubiquitinyl-[E2 ubiquitin-conjugating enzyme]-L-cysteine + [acceptor protein]-L-lysine = [E2 ubiquitin-conjugating enzyme]-L-cysteine + N(6)-ubiquitinyl-[acceptor protein]-L-lysine.. Its pathway is protein modification; protein ubiquitination. The chain is RING-H2 finger protein ATL43 (ATL43) from Arabidopsis thaliana (Mouse-ear cress).